The sequence spans 1176 residues: Chromosome partition protein Smc (1176 aa).

An ATP-binding site is contributed by 32 to 39; sequence PNGCGKSN. Residues 169–506 adopt a coiled-coil conformation; the sequence is GVSRYKERRR…VKLQEDVQKQ (338 aa). In terms of domain architecture, SMC hinge spans 521 to 623; it reads LGRLWQKLHI…TAPDLGQALA (103 aa). Coiled coils occupy residues 653–947 and 987–1024; these read DSEQ…LAAM and ERKE…LQAT.

This sequence belongs to the SMC family. Homodimer.

Its subcellular location is the cytoplasm. In terms of biological role, required for chromosome condensation and partitioning. This Bordetella petrii (strain ATCC BAA-461 / DSM 12804 / CCUG 43448) protein is Chromosome partition protein Smc.